A 286-amino-acid polypeptide reads, in one-letter code: Transcription factor bHLH11 (286 aa).

The tract at residues 1–34 (MDQPMKPKTCSESDFADDSSASSSSSSGQNLRGA) is disordered. Residues 18–27 (DSSASSSSSS) are compositionally biased toward low complexity. Residues 44 to 94 (AVCSQKAEREKLRRDKLKEQFLELGNALDPNRPKSDKASVLTDTIQMLKDV) form the bHLH domain. 2 disordered regions span residues 182-202 (EQQA…MKQD) and 244-286 (QQDV…MLKP). Low complexity-rich tracts occupy residues 183-198 (QQAS…ADAS) and 255-269 (SLTT…YSLS). The segment covering 270-279 (QAVQDSSPGT) has biased composition (polar residues).

As to quaternary structure, homodimer. Expressed consitutively in roots, leaves, stems, and flowers.

Its subcellular location is the nucleus. The chain is Transcription factor bHLH11 (BHLH11) from Arabidopsis thaliana (Mouse-ear cress).